Consider the following 147-residue polypeptide: Hemoglobin subunit delta (147 aa).

The Globin domain occupies 3 to 147; the sequence is HLTADEKAAV…VAAALAHKYH (145 aa). Residues His-64 and His-93 each coordinate heme b.

Belongs to the globin family. As to quaternary structure, heterotetramer of two delta chains and two alpha chains. As to expression, red blood cells.

This chain is Hemoglobin subunit delta (HBD), found in Carlito syrichta (Philippine tarsier).